A 313-amino-acid polypeptide reads, in one-letter code: Aspartate carbamoyltransferase catalytic subunit (313 aa).

The carbamoyl phosphate site is built by Arg-61 and Thr-62. Lys-89 serves as a coordination point for L-aspartate. Arg-111, His-139, and Gln-142 together coordinate carbamoyl phosphate. Arg-172 and Arg-227 together coordinate L-aspartate. The carbamoyl phosphate site is built by Gly-268 and Pro-269.

It belongs to the aspartate/ornithine carbamoyltransferase superfamily. ATCase family. As to quaternary structure, heterododecamer (2C3:3R2) of six catalytic PyrB chains organized as two trimers (C3), and six regulatory PyrI chains organized as three dimers (R2).

It carries out the reaction carbamoyl phosphate + L-aspartate = N-carbamoyl-L-aspartate + phosphate + H(+). The protein operates within pyrimidine metabolism; UMP biosynthesis via de novo pathway; (S)-dihydroorotate from bicarbonate: step 2/3. Catalyzes the condensation of carbamoyl phosphate and aspartate to form carbamoyl aspartate and inorganic phosphate, the committed step in the de novo pyrimidine nucleotide biosynthesis pathway. In Gluconobacter oxydans (strain 621H) (Gluconobacter suboxydans), this protein is Aspartate carbamoyltransferase catalytic subunit.